Reading from the N-terminus, the 147-residue chain is Myoglobin (147 aa).

One can recognise a Globin domain in the interval 2–137 (ADFEMVLKHW…VMTTIIADIE (136 aa)). Residue His60 participates in nitrite binding. His60 provides a ligand contact to O2. A heme b-binding site is contributed by His89.

Belongs to the globin family. In terms of assembly, monomeric.

It is found in the cytoplasm. The protein localises to the sarcoplasm. It catalyses the reaction Fe(III)-heme b-[protein] + nitric oxide + H2O = Fe(II)-heme b-[protein] + nitrite + 2 H(+). It carries out the reaction H2O2 + AH2 = A + 2 H2O. Functionally, monomeric heme protein which primary function is to store oxygen and facilitate its diffusion within muscle tissues. Reversibly binds oxygen through a pentacoordinated heme iron and enables its timely and efficient release as needed during periods of heightened demand. Depending on the oxidative conditions of tissues and cells, and in addition to its ability to bind oxygen, it also has a nitrite reductase activity whereby it regulates the production of bioactive nitric oxide. Under stress conditions, like hypoxia and anoxia, it also protects cells against reactive oxygen species thanks to its pseudoperoxidase activity. In Makaira nigricans (Atlantic blue marlin), this protein is Myoglobin (mb).